Here is a 253-residue protein sequence, read N- to C-terminus: uncharacterized protein (253 aa).

Positions 211-241 are disordered; that stretch reads TTRRKRYREDRDSGEDLGAESKRGNGSVRYT.

This is an uncharacterized protein from Ictalurid herpesvirus 1 (strain Auburn) (IcHV-1).